The primary structure comprises 1010 residues: DENN domain-containing protein 1A (1010 aa).

A uDENN domain is found at 13–143; the sequence is FEVYIEVNRP…HGHPIPEPGT (131 aa). Positions 160–296 constitute a cDENN domain; it reads ELPSIPENRN…VVSALKNRIR (137 aa). A dDENN domain is found at 298–375; that stretch reads MSTTTGDGVA…DGRLDLLNSG (78 aa). Positions 378-382 match the FXDXF motif motif; the sequence is FSDVF. The segment at 455-554 is disordered; that stretch reads GFSTATEEPL…EATVKEPQST (100 aa). Residues 472 to 482 are compositionally biased toward basic and acidic residues; that stretch reads IEKKRGEERRP. Basic residues predominate over residues 493–502; the sequence is PRPHVPRRPK. Polar residues predominate over residues 509 to 524; the sequence is SRTTAGSSPDQPQQYR. Basic and acidic residues predominate over residues 538–548; sequence SPEKDSSEATV. The short motif at 560 to 569 is the Clathrin box element; the sequence is SLLEDIFSNL.

Its subcellular location is the cytoplasmic vesicle. It is found in the clathrin-coated vesicle membrane. It localises to the presynaptic cell membrane. Guanine nucleotide exchange factor (GEF) regulating clathrin-mediated endocytosis through RAB35 activation. Promotes the exchange of GDP to GTP, converting inactive GDP-bound RAB35 into its active GTP-bound form. Regulates clathrin-mediated endocytosis of synaptic vesicles and mediates exit from early endosomes. Binds phosphatidylinositol-phosphates (PtdInsPs), with some preference for PtdIns(3)P. This Xenopus laevis (African clawed frog) protein is DENN domain-containing protein 1A (dennd1a).